Consider the following 198-residue polypeptide: Photosystem I assembly protein Ycf4 (198 aa).

A disordered region spans residues 1–20 (MTASTTINKGDSPNGDSSAS). 2 helical membrane passes run 38-58 (WASI…SSYL) and 78-98 (LVMG…WLAI).

It belongs to the Ycf4 family.

It localises to the cellular thylakoid membrane. Seems to be required for the assembly of the photosystem I complex. This chain is Photosystem I assembly protein Ycf4, found in Trichormus variabilis (strain ATCC 29413 / PCC 7937) (Anabaena variabilis).